The primary structure comprises 447 residues: Phosphoglucosamine mutase (447 aa).

Ser106 functions as the Phosphoserine intermediate in the catalytic mechanism. Residues Ser106, Asp245, Asp247, and Asp249 each contribute to the Mg(2+) site. The residue at position 106 (Ser106) is a Phosphoserine.

The protein belongs to the phosphohexose mutase family. Requires Mg(2+) as cofactor. Activated by phosphorylation.

The catalysed reaction is alpha-D-glucosamine 1-phosphate = D-glucosamine 6-phosphate. In terms of biological role, catalyzes the conversion of glucosamine-6-phosphate to glucosamine-1-phosphate. This Cupriavidus pinatubonensis (strain JMP 134 / LMG 1197) (Cupriavidus necator (strain JMP 134)) protein is Phosphoglucosamine mutase.